The following is a 292-amino-acid chain: Lipoyl synthase (292 aa).

Positions 34, 39, 45, 60, 64, 67, and 273 each coordinate [4Fe-4S] cluster. In terms of domain architecture, Radical SAM core spans 46–262; sequence WNKKHATVMI…KYVAYSKGFL (217 aa).

Belongs to the radical SAM superfamily. Lipoyl synthase family. [4Fe-4S] cluster serves as cofactor.

The protein localises to the cytoplasm. The catalysed reaction is [[Fe-S] cluster scaffold protein carrying a second [4Fe-4S](2+) cluster] + N(6)-octanoyl-L-lysyl-[protein] + 2 oxidized [2Fe-2S]-[ferredoxin] + 2 S-adenosyl-L-methionine + 4 H(+) = [[Fe-S] cluster scaffold protein] + N(6)-[(R)-dihydrolipoyl]-L-lysyl-[protein] + 4 Fe(3+) + 2 hydrogen sulfide + 2 5'-deoxyadenosine + 2 L-methionine + 2 reduced [2Fe-2S]-[ferredoxin]. Its pathway is protein modification; protein lipoylation via endogenous pathway; protein N(6)-(lipoyl)lysine from octanoyl-[acyl-carrier-protein]: step 2/2. In terms of biological role, catalyzes the radical-mediated insertion of two sulfur atoms into the C-6 and C-8 positions of the octanoyl moiety bound to the lipoyl domains of lipoate-dependent enzymes, thereby converting the octanoylated domains into lipoylated derivatives. This is Lipoyl synthase from Ehrlichia ruminantium (strain Welgevonden).